The following is a 225-amino-acid chain: Uridylate kinase (225 aa).

9 to 10 contacts ATP; sequence GS. Gly-44 contacts UMP. ATP-binding residues include Gly-45 and Arg-49. UMP contacts are provided by residues Asp-66 and 114-120; that span reads THPGHTT. Positions 140, 141, 146, and 149 each coordinate ATP.

The protein belongs to the UMP kinase family. As to quaternary structure, homohexamer.

The protein resides in the cytoplasm. It carries out the reaction UMP + ATP = UDP + ADP. The protein operates within pyrimidine metabolism; CTP biosynthesis via de novo pathway; UDP from UMP (UMPK route): step 1/1. Inhibited by UTP. Functionally, catalyzes the reversible phosphorylation of UMP to UDP. This is Uridylate kinase from Pyrococcus abyssi (strain GE5 / Orsay).